The chain runs to 445 residues: MSETTLNAAEQPIDELVSWVKQHDFSLNLTTERLAFLIAIAVLSNERFDEELGEGELHDAFTIVTRLFEETGEASAFRANNAINELVKQRLISRFTSEMTEGASIYRLSPLAIGITDYYVRHREFSKLRLSIQLSMVAGEMAKAIEAAKQGGTAGHWKKNVYAVLKYSVGEIFDQIDLNQRVMDEQQQSVKQQIADLLNKDWREAINNCESLLSETSNTLKELQDTLQAAGDELQTQILDIQELVYGDEELEFIEETLFGLQMKLDRITSWGQQAIDLWIGYDRHVHKFIRTAIDMDKNRIFSTRLRQSVKDYFDMPWYLTYADAERLSDLRDEALVLRDDEVTGQVPLEVEYEEFQQVNDELAERIGEMLRLHKDNGKPIDLGIVLKDYLAQHPRTHHFDLARIVIDQAVRMGYSESDYQAIQPDWQAINDYGAKVQANVIDRY.

Residues 213–241 (LSETSNTLKELQDTLQAAGDELQTQILDI) form a leucine-zipper region.

Belongs to the MukF family. Interacts, and probably forms a ternary complex, with MukE and MukB via its C-terminal region. The complex formation is stimulated by calcium or magnesium. It is required for an interaction between MukE and MukB.

The protein resides in the cytoplasm. Its subcellular location is the nucleoid. Its function is as follows. Involved in chromosome condensation, segregation and cell cycle progression. May participate in facilitating chromosome segregation by condensation DNA from both sides of a centrally located replisome during cell division. Not required for mini-F plasmid partitioning. Probably acts via its interaction with MukB and MukE. Overexpression results in anucleate cells. It has a calcium binding activity. In Vibrio vulnificus (strain YJ016), this protein is Chromosome partition protein MukF.